We begin with the raw amino-acid sequence, 226 residues long: 6-deoxy-6-sulfo-D-fructose transaldolase (226 aa).

K89 serves as the catalytic Schiff-base intermediate with substrate.

It belongs to the transaldolase family.

It catalyses the reaction 6-deoxy-6-sulfo-D-fructose + D-glyceraldehyde 3-phosphate = D-fructose 6-phosphate + (2S)-3-sulfolactaldehyde. The enzyme catalyses 6-deoxy-6-sulfo-D-fructose + D-erythrose 4-phosphate = (2S)-3-sulfolactaldehyde + D-sedoheptulose 7-phosphate. Its function is as follows. Part of the sulfo-TAL (or sulfo-SFT) pathway, a D-sulfoquinovose degradation pathway that produces sulfolactate (SL). Catalyzes the conversion of 6-deoxy-6-sulfo-D-fructose (SF) and glyceraldehyde 3-phosphate (GAP) into fructose-6-phosphate (F6P) and 3-sulfolactaldehyde (SLA). Can also catalyze the SF-cleavage with erythrose 4-phosphate (E4P) as acceptor, forming 3-sulfolactaldehyde (SLA) and sedoheptulose 7-phosphate (S7P). In Priestia aryabhattai (Bacillus aryabhattai), this protein is 6-deoxy-6-sulfo-D-fructose transaldolase.